Here is a 388-residue protein sequence, read N- to C-terminus: Succinate--CoA ligase [ADP-forming] subunit beta (388 aa).

The ATP-grasp domain maps to 9-244; that stretch reads KQLFAEFGLP…PSQEDEREAH (236 aa). Residues lysine 46, 53 to 55, glutamate 99, serine 102, and glutamate 107 each bind ATP; that span reads GRG. Residues asparagine 199 and aspartate 213 each contribute to the Mg(2+) site. Substrate is bound by residues asparagine 264 and 321 to 323; that span reads GIV.

This sequence belongs to the succinate/malate CoA ligase beta subunit family. In terms of assembly, heterotetramer of two alpha and two beta subunits. The cofactor is Mg(2+).

The enzyme catalyses succinate + ATP + CoA = succinyl-CoA + ADP + phosphate. It carries out the reaction GTP + succinate + CoA = succinyl-CoA + GDP + phosphate. It participates in carbohydrate metabolism; tricarboxylic acid cycle; succinate from succinyl-CoA (ligase route): step 1/1. Its function is as follows. Succinyl-CoA synthetase functions in the citric acid cycle (TCA), coupling the hydrolysis of succinyl-CoA to the synthesis of either ATP or GTP and thus represents the only step of substrate-level phosphorylation in the TCA. The beta subunit provides nucleotide specificity of the enzyme and binds the substrate succinate, while the binding sites for coenzyme A and phosphate are found in the alpha subunit. This chain is Succinate--CoA ligase [ADP-forming] subunit beta, found in Aliivibrio fischeri (strain ATCC 700601 / ES114) (Vibrio fischeri).